A 217-amino-acid polypeptide reads, in one-letter code: Homologous-pairing protein 2 homolog (217 aa).

The stretch at 84–152 (ADLHGLDASI…RLKNIKAATN (69 aa)) forms a coiled coil. Residues 118 to 182 (TSALTTPEMQ…WRKRKRMTTE (65 aa)) form a DNA-binding region.

Belongs to the HOP2 family. In terms of assembly, interacts with the DNA-binding domain of the nuclear receptors NR3C1/GR, ESR2/ER-beta, THRB and RXRA. Forms a stable heterodimer with MND1. Interacts with PSMC3/TBP1. Phosphorylated by PKA, PKC and MAPK. As to expression, highly expressed in testis and more specifically in spermatocytes. Detected in spleen, ovary and thymus.

The protein resides in the nucleus. In terms of biological role, plays an important role in meiotic recombination. Stimulates DMC1-mediated strand exchange required for pairing homologous chromosomes during meiosis. The complex PSMC3IP/MND1 binds DNA, stimulates the recombinase activity of DMC1 as well as DMC1 D-loop formation from double-strand DNA. This complex stabilizes presynaptic RAD51 and DMC1 filaments formed on single strand DNA to capture double-strand DNA. This complex stimulates both synaptic and presynaptic critical steps in RAD51 and DMC1-promoted homologous pairing. May inhibit HIV-1 viral protein TAT activity and modulate the activity of proteasomes through association with PSMC3. This Mus musculus (Mouse) protein is Homologous-pairing protein 2 homolog (Psmc3ip).